Here is a 429-residue protein sequence, read N- to C-terminus: Ribosomal RNA small subunit methyltransferase B (429 aa).

S-adenosyl-L-methionine is bound by residues 254–260 (CAAPGGK), aspartate 277, aspartate 303, and aspartate 322. The active-site Nucleophile is the cysteine 375.

This sequence belongs to the class I-like SAM-binding methyltransferase superfamily. RsmB/NOP family.

It localises to the cytoplasm. The catalysed reaction is cytidine(967) in 16S rRNA + S-adenosyl-L-methionine = 5-methylcytidine(967) in 16S rRNA + S-adenosyl-L-homocysteine + H(+). Functionally, specifically methylates the cytosine at position 967 (m5C967) of 16S rRNA. This Erwinia tasmaniensis (strain DSM 17950 / CFBP 7177 / CIP 109463 / NCPPB 4357 / Et1/99) protein is Ribosomal RNA small subunit methyltransferase B.